A 379-amino-acid polypeptide reads, in one-letter code: Lipoyl synthase 1, mitochondrial (379 aa).

The [4Fe-4S] cluster site is built by Cys106, Cys111, Cys117, Cys137, Cys141, Cys144, and Ser352. The Radical SAM core domain maps to 122 to 341 (EHGTQTATIM…EERGNELGFL (220 aa)).

The protein belongs to the radical SAM superfamily. Lipoyl synthase family. The cofactor is [4Fe-4S] cluster.

The protein resides in the mitochondrion. It carries out the reaction [[Fe-S] cluster scaffold protein carrying a second [4Fe-4S](2+) cluster] + N(6)-octanoyl-L-lysyl-[protein] + 2 oxidized [2Fe-2S]-[ferredoxin] + 2 S-adenosyl-L-methionine + 4 H(+) = [[Fe-S] cluster scaffold protein] + N(6)-[(R)-dihydrolipoyl]-L-lysyl-[protein] + 4 Fe(3+) + 2 hydrogen sulfide + 2 5'-deoxyadenosine + 2 L-methionine + 2 reduced [2Fe-2S]-[ferredoxin]. Its pathway is protein modification; protein lipoylation via endogenous pathway; protein N(6)-(lipoyl)lysine from octanoyl-[acyl-carrier-protein]: step 2/2. Functionally, catalyzes the radical-mediated insertion of two sulfur atoms into the C-6 and C-8 positions of the octanoyl moiety bound to the lipoyl domains of lipoate-dependent enzymes, thereby converting the octanoylated domains into lipoylated derivatives. This Drosophila yakuba (Fruit fly) protein is Lipoyl synthase 1, mitochondrial.